Reading from the N-terminus, the 187-residue chain is UPF0340 protein stu1894 (187 aa).

Belongs to the UPF0340 family.

The sequence is that of UPF0340 protein stu1894 from Streptococcus thermophilus (strain ATCC BAA-250 / LMG 18311).